The sequence spans 196 residues: Large ribosomal subunit protein uL5 (196 aa).

This sequence belongs to the universal ribosomal protein uL5 family. In terms of assembly, part of the 50S ribosomal subunit; part of the 5S rRNA/L5/L18/L25 subcomplex. Contacts the 5S rRNA and the P site tRNA. Forms a bridge to the 30S subunit in the 70S ribosome.

Functionally, this is one of the proteins that bind and probably mediate the attachment of the 5S RNA into the large ribosomal subunit, where it forms part of the central protuberance. In the 70S ribosome it contacts protein S13 of the 30S subunit (bridge B1b), connecting the 2 subunits; this bridge is implicated in subunit movement. Contacts the P site tRNA; the 5S rRNA and some of its associated proteins might help stabilize positioning of ribosome-bound tRNAs. This chain is Large ribosomal subunit protein uL5, found in Acidothermus cellulolyticus (strain ATCC 43068 / DSM 8971 / 11B).